The chain runs to 214 residues: Outer-membrane lipoprotein LolB (214 aa).

The N-terminal stretch at 1–25 is a signal peptide; it reads MNNLKRFTKSIFSCIALSGLLFLGG. Cysteine 26 carries the N-palmitoyl cysteine lipid modification. Cysteine 26 carries the S-diacylglycerol cysteine lipid modification.

The protein belongs to the LolB family. Monomer.

The protein localises to the cell outer membrane. Its function is as follows. Plays a critical role in the incorporation of lipoproteins in the outer membrane after they are released by the LolA protein. The sequence is that of Outer-membrane lipoprotein LolB from Shewanella sp. (strain MR-7).